We begin with the raw amino-acid sequence, 22 residues long: Heat shock 70-related protein 1, mitochondrial (22 aa).

This sequence belongs to the heat shock protein 70 family.

The protein resides in the mitochondrion. This chain is Heat shock 70-related protein 1, mitochondrial, found in Leishmania tarentolae (Sauroleishmania tarentolae).